A 617-amino-acid polypeptide reads, in one-letter code: DNA double-strand break repair protein Mre11 (617 aa).

Mn(2+) contacts are provided by aspartate 12, histidine 14, aspartate 53, and asparagine 88. The active-site Proton donor is the histidine 89. The Mn(2+) site is built by histidine 158, aspartate 189, and histidine 191. Over residues 395-432 (SPVDPSSSVSSIESSGSVSPIDSVSTVSPSSPSSSAII) the composition is skewed to low complexity. 2 disordered regions span residues 395 to 437 (SPVD…EPEE) and 513 to 617 (VEDE…GDYL). A compositionally biased stretch (polar residues) spans 529–547 (APQSSSPVSFSDNSQTGFS). Over residues 549 to 559 (ISPPESIPSPE) the composition is skewed to low complexity. Residues 560-583 (ILKENSEADADEKPVDGKLSEEKP) show a composition bias toward basic and acidic residues.

Belongs to the MRE11/RAD32 family. Homodimer. Forms a heterotetramer composed of two Mre11 subunits and two Rad50 subunits. The cofactor is Mn(2+).

Nuclease activity is regulated by Rad50. In terms of biological role, part of the Rad50/Mre11 complex, which is involved in the early steps of DNA double-strand break (DSB) repair. The complex may facilitate opening of the processed DNA ends to aid in the recruitment of HerA and NurA. Mre11 binds to DSB ends and has both double-stranded 3'-5' exonuclease activity and single-stranded endonuclease activity. The protein is DNA double-strand break repair protein Mre11 of Methanosarcina mazei (strain ATCC BAA-159 / DSM 3647 / Goe1 / Go1 / JCM 11833 / OCM 88) (Methanosarcina frisia).